A 338-amino-acid polypeptide reads, in one-letter code: Ferredoxin--NADP reductase (338 aa).

The FAD site is built by Thr14, Asp33, Gln41, Tyr46, Val86, Phe120, Asp284, and Thr325.

It belongs to the ferredoxin--NADP reductase type 2 family. Homodimer. Requires FAD as cofactor.

It catalyses the reaction 2 reduced [2Fe-2S]-[ferredoxin] + NADP(+) + H(+) = 2 oxidized [2Fe-2S]-[ferredoxin] + NADPH. The chain is Ferredoxin--NADP reductase from Pelagibacter ubique (strain HTCC1062).